A 369-amino-acid polypeptide reads, in one-letter code: Transmembrane protein 198 (369 aa).

The next 7 membrane-spanning stretches (helical) occupy residues 37–57, 60–80, 93–113, 117–137, 148–168, 181–201, and 216–236; these read VVPSVVCSMCCLFGIIYCFFG, CFKAVLFLTGLMFGSVIIFLL, VEASVGIGLGIGTLCGLVTML, VGLFMVGLLLGLLVGIGTLIG, SVWVPLGVLLGLGMLFAVLTL, VFGAAVIVVATDYFVELFALV, and VCWTTWVVLGAWPALALLGVL. Positions 266–308 are disordered; it reads RQKEERRESSRKKKRKQPQSAQHTHAAKALHPEPAYRRKPNPI.

The protein belongs to the TMEM198 family.

Its subcellular location is the membrane. In Danio rerio (Zebrafish), this protein is Transmembrane protein 198 (tmem198ab).